The sequence spans 67 residues: UPF0337 protein msl9551 (67 aa).

This sequence belongs to the UPF0337 (CsbD) family.

This Mesorhizobium japonicum (strain LMG 29417 / CECT 9101 / MAFF 303099) (Mesorhizobium loti (strain MAFF 303099)) protein is UPF0337 protein msl9551.